We begin with the raw amino-acid sequence, 342 residues long: Ribosomal RNA small subunit methyltransferase H (342 aa).

Residues 36–38, aspartate 56, phenylalanine 82, aspartate 100, and glutamine 107 each bind S-adenosyl-L-methionine; that span reads GGH. Residues 309-342 are disordered; sequence ENRESGMGKGHGAAASRFPTPDSRFPTSPNGDAP. Positions 333 to 342 are enriched in polar residues; it reads FPTSPNGDAP.

The protein belongs to the methyltransferase superfamily. RsmH family.

It is found in the cytoplasm. It catalyses the reaction cytidine(1402) in 16S rRNA + S-adenosyl-L-methionine = N(4)-methylcytidine(1402) in 16S rRNA + S-adenosyl-L-homocysteine + H(+). Specifically methylates the N4 position of cytidine in position 1402 (C1402) of 16S rRNA. The protein is Ribosomal RNA small subunit methyltransferase H of Xanthomonas campestris pv. campestris (strain B100).